Reading from the N-terminus, the 457-residue chain is tRNA modification GTPase MnmE (457 aa).

(6S)-5-formyl-5,6,7,8-tetrahydrofolate contacts are provided by R23, E85, and R124. In terms of domain architecture, TrmE-type G spans 220 to 376 (GALVVLAGQV…LVTAIRAAVL (157 aa)). N230 serves as a coordination point for K(+). GTP is bound by residues 230-235 (NAGKSS), 249-255 (TDLPGTT), and 274-277 (DTAG). S234 serves as a coordination point for Mg(2+). 3 residues coordinate K(+): T249, L251, and T254. T255 serves as a coordination point for Mg(2+). Residue K457 participates in (6S)-5-formyl-5,6,7,8-tetrahydrofolate binding.

The protein belongs to the TRAFAC class TrmE-Era-EngA-EngB-Septin-like GTPase superfamily. TrmE GTPase family. Homodimer. Heterotetramer of two MnmE and two MnmG subunits. K(+) serves as cofactor.

It is found in the cytoplasm. Exhibits a very high intrinsic GTPase hydrolysis rate. Involved in the addition of a carboxymethylaminomethyl (cmnm) group at the wobble position (U34) of certain tRNAs, forming tRNA-cmnm(5)s(2)U34. The chain is tRNA modification GTPase MnmE from Nitratidesulfovibrio vulgaris (strain ATCC 29579 / DSM 644 / CCUG 34227 / NCIMB 8303 / VKM B-1760 / Hildenborough) (Desulfovibrio vulgaris).